The primary structure comprises 356 residues: GTPase Obg (356 aa).

Residues 1-159 (MKFLDQAKVY…RWIWLRLKLI (159 aa)) enclose the Obg domain. The 169-residue stretch at 160-328 (ADAGLVGLPN…ALYAIAQHLG (169 aa)) folds into the OBG-type G domain. Residues 166-173 (GLPNAGKS), 191-195 (FTTLH), 213-216 (DIPG), 280-283 (NKID), and 309-311 (SGV) contribute to the GTP site. The Mg(2+) site is built by Ser-173 and Thr-193. The segment at 333–356 (DIPLPKPSNADEEDPDTDQPWSPV) is disordered.

Belongs to the TRAFAC class OBG-HflX-like GTPase superfamily. OBG GTPase family. As to quaternary structure, monomer. It depends on Mg(2+) as a cofactor.

Its subcellular location is the cytoplasm. Its function is as follows. An essential GTPase which binds GTP, GDP and possibly (p)ppGpp with moderate affinity, with high nucleotide exchange rates and a fairly low GTP hydrolysis rate. Plays a role in control of the cell cycle, stress response, ribosome biogenesis and in those bacteria that undergo differentiation, in morphogenesis control. This Hyphomonas neptunium (strain ATCC 15444) protein is GTPase Obg.